Consider the following 496-residue polypeptide: MQLHDFGFINYAVLFGYLAAMLLVGVYFSKRQKTADDYFRGGGRVPGWAAGVSVFATTLSSITFMSIPAKAYTSDWTFIIGQYLAIAILPLVFYFYIPFFRKLKITSAYEYLEARFDVRSRLFASLSFMLFHIGRVAIITYLTVLALRPFMGIDPVVLIVLISLLCIIYTWMGGIEGVIWTDVIQGLLLSGGAVLIFIMICFKVDGGISEIFTTTAQADKFFPTTQWRWSWTDSTIPVLMIGFLFANIQQFTASQDVVQRYIVTDSIKETKRTLITNAKLVAIIPIFFFAIGSALFVYYQQNPSLLPAGFNTGGILPLFIVTEMPIGIAGLIIAAIFAAAQSSISSSLNSISSCFNSDIYTRLSKSSPSPEQKMKVAKLVIIVAGIFSSLAAIWLVLSDEAEIWDAFNSLIGLMGGPMTGLFMLGIFVKRANAGSAVVGIIVSIIAVLAARYGSDLNFFFYGVIGSMSVVIAGTITAPLFAPAKQLSLDDSETSEN.

The Periplasmic segment spans residues 1-7 (MQLHDFG). The helical transmembrane segment at 8 to 29 (FINYAVLFGYLAAMLLVGVYFS) threads the bilayer. Residues 30–46 (KRQKTADDYFRGGGRVP) are Cytoplasmic-facing. Residues 47-59 (GWAAGVSVFATTL) traverse the membrane as a helical segment. Residue Ala-56 participates in Na(+) binding. Residue Thr-58 participates in N-acetyl-alpha-neuraminate binding. Leu-59 contacts Na(+). N-acetyl-alpha-neuraminate is bound by residues Ser-60, Thr-63, and Gln-82. Topologically, residues 60-76 (SSITFMSIPAKAYTSDW) are periplasmic. The chain crosses the membrane as a helical span at residues 77 to 92 (TFIIGQYLAIAILPLV). The Cytoplasmic portion of the chain corresponds to 93-116 (FYFYIPFFRKLKITSAYEYLEARF). A helical transmembrane segment spans residues 117 to 144 (DVRSRLFASLSFMLFHIGRVAIITYLTV). An N-acetyl-alpha-neuraminate-binding site is contributed by Arg-135. Residues 145-154 (LALRPFMGID) lie on the Periplasmic side of the membrane. A helical membrane pass occupies residues 155–172 (PVVLIVLISLLCIIYTWM). Over 173-174 (GG) the chain is Cytoplasmic. The helical transmembrane segment at 175–199 (IEGVIWTDVIQGLLLSGGAVLIFIM) threads the bilayer. Residue Asp-182 coordinates Na(+). Residues 200 to 235 (ICFKVDGGISEIFTTTAQADKFFPTTQWRWSWTDST) are Periplasmic-facing. A helical transmembrane segment spans residues 236–252 (IPVLMIGFLFANIQQFT). The Cytoplasmic segment spans residues 253-272 (ASQDVVQRYIVTDSIKETKR). Residues 273–292 (TLITNAKLVAIIPIFFFAIG) form a helical membrane-spanning segment. Over 293 to 325 (SALFVYYQQNPSLLPAGFNTGGILPLFIVTEMP) the chain is Periplasmic. Residues 326–356 (IGIAGLIIAAIFAAAQSSISSSLNSISSCFN) form a helical membrane-spanning segment. 5 residues coordinate Na(+): Ala-339, Ser-342, Ser-343, Ser-345, and Ser-346. Residues 357–374 (SDIYTRLSKSSPSPEQKM) are Cytoplasmic-facing. A helical membrane pass occupies residues 375–396 (KVAKLVIIVAGIFSSLAAIWLV). The Periplasmic segment spans residues 397–403 (LSDEAEI). A helical membrane pass occupies residues 404–427 (WDAFNSLIGLMGGPMTGLFMLGIF). The Cytoplasmic portion of the chain corresponds to 428-432 (VKRAN). A helical membrane pass occupies residues 433–453 (AGSAVVGIIVSIIAVLAARYG). The Periplasmic segment spans residues 454–457 (SDLN). A helical transmembrane segment spans residues 458–479 (FFFYGVIGSMSVVIAGTITAPL). Topologically, residues 480–496 (FAPAKQLSLDDSETSEN) are cytoplasmic.

This sequence belongs to the sodium:solute symporter (SSF) (TC 2.A.21) family.

The protein localises to the cell inner membrane. It carries out the reaction N-acetyl-alpha-neuraminate(out) + 2 Na(+)(out) = N-acetyl-alpha-neuraminate(in) + 2 Na(+)(in). Its activity is regulated as follows. Both Na(+) sites regulate Neu5Ac transport. The binding energy of the second Na(+) ion may be used to allosterically stabilize the substrate without directly coordinating it. In the absence of external Na(+), the rate is reduced by 78%. Its function is as follows. Symporter that uses the Na(+) gradient as the driving force for the uptake of the sialic acid N-acetylneuraminic acid (Neu5Ac). It allows the use of host-derived Neu5Ac as an energy source by P.mirabilis. Also binds N-glycolylneuraminic acid (Neu5Gc) and ketodeoxynonulosonic acid (KDN). Shows the highest affinity for Neu5Ac and Neu5Gc, which commonly occupy the terminal non-reducing position of mammalian cell surface glycoconjugates. The chain is Sodium/sialic acid symporter SiaT from Proteus mirabilis (strain HI4320).